The chain runs to 535 residues: T-complex protein 1 subunit beta (535 aa).

N-acetylalanine is present on Ala-2. At Ser-3 the chain carries Phosphoserine. An N6-acetyllysine modification is found at Lys-13. Gly-44 contacts ADP. Residue Gly-44 participates in ATP binding. At Ser-60 the chain carries Phosphoserine. A Mg(2+)-binding site is contributed by Asp-97. ADP contacts are provided by Gly-98, Thr-99, Thr-100, and Ser-101. ATP is bound by residues Gly-98, Thr-99, and Thr-100. Lys-154 carries the N6-acetyllysine modification. 2 residues coordinate ADP: Ser-168 and Ser-169. Lys-181 carries the post-translational modification N6-acetyllysine. Residue Lys-248 forms a Glycyl lysine isopeptide (Lys-Gly) (interchain with G-Cter in SUMO2) linkage. Phosphoserine is present on Ser-260. Thr-261 carries the post-translational modification Phosphothreonine. ADP-binding residues include Gly-410, Glu-495, and Lys-500. 2 residues coordinate ATP: Glu-495 and Lys-500.

It belongs to the TCP-1 chaperonin family. As to quaternary structure, component of the chaperonin-containing T-complex (TRiC), a hexadecamer composed of two identical back-to-back stacked rings enclosing a protein folding chamber. Each ring is made up of eight different subunits: TCP1/CCT1, CCT2, CCT3, CCT4, CCT5, CCT6A/CCT6, CCT7, CCT8. Interacts with PACRG. Interacts with FLCN. Interacts with DLEC1. Interacts with SVEP1.

The protein resides in the cytoplasm. It catalyses the reaction ATP + H2O = ADP + phosphate + H(+). Component of the chaperonin-containing T-complex (TRiC), a molecular chaperone complex that assists the folding of actin, tubulin and other proteins upon ATP hydrolysis. The TRiC complex mediates the folding of WRAP53/TCAB1, thereby regulating telomere maintenance. As part of the TRiC complex may play a role in the assembly of BBSome, a complex involved in ciliogenesis regulating transports vesicles to the cilia. This Rattus norvegicus (Rat) protein is T-complex protein 1 subunit beta (Cct2).